A 554-amino-acid chain; its full sequence is Solute carrier family 22 member 1 (554 aa).

Residues methionine 1–alanine 21 are Cytoplasmic-facing. Residues phenylalanine 22–leucine 42 form a helical membrane-spanning segment. At glycine 43 to aspartate 149 the chain is on the extracellular side. N-linked (GlcNAc...) asparagine glycosylation occurs at asparagine 71. A helical membrane pass occupies residues leucine 150–alanine 170. Residues aspartate 171–lysine 176 lie on the Cytoplasmic side of the membrane. The chain crosses the membrane as a helical span at residues leucine 177–proline 197. The Extracellular segment spans residues asparagine 198–arginine 206. The chain crosses the membrane as a helical span at residues leucine 207 to glycine 229. The Cytoplasmic portion of the chain corresponds to serine 230–threonine 235. A helical transmembrane segment spans residues valine 236–tyrosine 256. At alanine 257–arginine 262 the chain is on the extracellular side. Residues tryptophan 263–proline 283 form a helical membrane-spanning segment. Positions proline 283–arginine 287 match the Proline-rich sequence motif. At glutamate 284–threonine 347 the chain is on the cytoplasmic side. Serine 333 is subject to Phosphoserine. A helical transmembrane segment spans residues phenylalanine 348–methionine 368. At glycine 369 to tyrosine 376 the chain is on the extracellular side. Residues leucine 377–isoleucine 397 form a helical membrane-spanning segment. The Cytoplasmic segment spans residues aspartate 398–arginine 402. The chain crosses the membrane as a helical span at residues isoleucine 403–isoleucine 423. Residues serine 424–asparagine 431 lie on the Extracellular side of the membrane. The helical transmembrane segment at isoleucine 432 to valine 452 threads the bilayer. Residues asparagine 453–leucine 464 are Cytoplasmic-facing. A helical membrane pass occupies residues glycine 465–phenylalanine 485. At arginine 486–glutamine 492 the chain is on the extracellular side. A helical membrane pass occupies residues alanine 493–leucine 513. Over proline 514–threonine 554 the chain is Cytoplasmic. Threonine 541 is subject to Phosphothreonine.

This sequence belongs to the major facilitator (TC 2.A.1) superfamily. Organic cation transporter (TC 2.A.1.19) family. In terms of processing, phosphorylated. As to expression, widely expressed with high level in liver. In liver, expressed around the central vein. Expressed in kidney. Expressed in small intestine enterocytes. Localized to peritubular myoid cells, Leydig cells and moderately to the basal membrane of Sertoli cells in testes. Expressed in tracheal and bronchial ciliated epithelium in the respiratory tract. Also expressed in skeletal muscle, stomach, spleen, heart, placentacolon, brain, granulycytes and lympohocytes. Expressed in liver and in glial cell lines. In terms of tissue distribution, expressed in glial cell lines. Not expressed in liver.

Its subcellular location is the basolateral cell membrane. The protein resides in the apical cell membrane. It localises to the lateral cell membrane. The protein localises to the basal cell membrane. It is found in the cell membrane. The enzyme catalyses 1-methylnicotinamide(out) = 1-methylnicotinamide(in). It carries out the reaction dopamine(out) = dopamine(in). The catalysed reaction is serotonin(out) = serotonin(in). It catalyses the reaction (R)-adrenaline(out) = (R)-adrenaline(in). The enzyme catalyses histamine(out) = histamine(in). It carries out the reaction guanidine(out) = guanidine(in). The catalysed reaction is acetylcholine(in) = acetylcholine(out). It catalyses the reaction thiamine(in) = thiamine(out). The enzyme catalyses agmatine(out) = agmatine(in). It carries out the reaction putrescine(out) = putrescine(in). The catalysed reaction is spermidine(in) = spermidine(out). It catalyses the reaction L-histidyl-L-proline diketopiperazine(in) = L-histidyl-L-proline diketopiperazine(out). The enzyme catalyses (R)-salsolinol(in) = (R)-salsolinol(out). It carries out the reaction prostaglandin F2alpha(out) = prostaglandin F2alpha(in). The catalysed reaction is prostaglandin E2(out) = prostaglandin E2(in). With respect to regulation, phosphorylation of the transporter leads to changes in its substrate affinity, resulting in a regulation of the transport activity. In contrast with rat ortholog, ASP uptake is inhibited by protein kinase A (PKA) and C (PKC) activation. ASP uptake is also endogenously activated by calmodulin, the calmodulin-dependent kinase II and LCK tyrosine kinase. Inhibited by cGMP, most likely through a cGMP-binding protein that interacts with OCT1. Functionally, electrogenic voltage-dependent transporter that mediates the transport of a variety of organic cations such as endogenous bioactive amines, cationic drugs and xenobiotics. Functions as a pH- and Na(+)-independent, bidirectional transporter. Cation cellular uptake or release is driven by the electrochemical potential (i.e. membrane potential and concentration gradient) and substrate selectivity. Hydrophobicity is a major requirement for recognition in polyvalent substrates and inhibitors. Primarily expressed at the basolateral membrane of hepatocytes and proximal tubules and involved in the uptake and disposition of cationic compounds by hepatic and renal clearance from the blood flow. Most likely functions as an uptake carrier in enterocytes contributing to the intestinal elimination of organic cations from the systemic circulation. Transports endogenous monoamines such as N-1-methylnicotinamide (NMN), guanidine, histamine, neurotransmitters dopamine, serotonin and adrenaline. Also transports natural polyamines such as spermidine, agmatine and putrescine at low affinity, but relatively high turnover. Involved in the hepatic uptake of vitamin B1/thiamine, hence regulating hepatic lipid and energy metabolism. Mediates the bidirectional transport of acetylcholine (ACh) at the apical membrane of ciliated cell in airway epithelium, thereby playing a role in luminal release of ACh from bronchial epithelium. Transports dopaminergic neuromodulators cyclo(his-pro) and salsolinol with lower efficency. Also capable of transporting non-amine endogenous compounds such as prostaglandin E2 (PGE2) and prostaglandin F2-alpha (PGF2-alpha). May contribute to the transport of cationic compounds in testes across the blood-testis-barrier. Also involved in the uptake of xenobiotics tributylmethylammonium (TBuMA), quinidine, N-methyl-quinine (NMQ), N-methyl-quinidine (NMQD) N-(4,4-azo-n-pentyl)-quinuclidine (APQ), azidoprocainamide methoiodide (AMP), N-(4,4-azo-n-pentyl)-21-deoxyajmalinium (APDA) and 4-(4-(dimethylamino)styryl)-N-methylpyridinium (ASP). Its function is as follows. Mediates the uptake of 1-methyl-4-phenylpyridinium (MPP(+)). In terms of biological role, not able to uptake 1-methyl-4-phenylpyridinium (MPP(+)). The chain is Solute carrier family 22 member 1 from Homo sapiens (Human).